The sequence spans 200 residues: UPF0301 protein BruAb1_0502 (200 aa).

Belongs to the UPF0301 (AlgH) family.

The chain is UPF0301 protein BruAb1_0502 from Brucella abortus biovar 1 (strain 9-941).